Consider the following 180-residue polypeptide: NAD(P)H-quinone oxidoreductase subunit I, chloroplastic (180 aa).

4Fe-4S ferredoxin-type domains follow at residues G55 to K84 and L95 to E124. Positions 64, 67, 70, 74, 104, 107, 110, and 114 each coordinate [4Fe-4S] cluster.

Belongs to the complex I 23 kDa subunit family. NDH is composed of at least 16 different subunits, 5 of which are encoded in the nucleus. [4Fe-4S] cluster serves as cofactor.

The protein resides in the plastid. Its subcellular location is the chloroplast thylakoid membrane. It carries out the reaction a plastoquinone + NADH + (n+1) H(+)(in) = a plastoquinol + NAD(+) + n H(+)(out). The catalysed reaction is a plastoquinone + NADPH + (n+1) H(+)(in) = a plastoquinol + NADP(+) + n H(+)(out). NDH shuttles electrons from NAD(P)H:plastoquinone, via FMN and iron-sulfur (Fe-S) centers, to quinones in the photosynthetic chain and possibly in a chloroplast respiratory chain. The immediate electron acceptor for the enzyme in this species is believed to be plastoquinone. Couples the redox reaction to proton translocation, and thus conserves the redox energy in a proton gradient. The chain is NAD(P)H-quinone oxidoreductase subunit I, chloroplastic from Ranunculus macranthus (Large buttercup).